A 62-amino-acid chain; its full sequence is Prokaryotic ubiquitin-like protein Pup (62 aa).

The disordered stretch occupies residues 1 to 29 (MSQQSLNAPGPGAEDGNDPEAVTGGQTFA). An ARC ATPase binding region spans residues 21 to 56 (AVTGGQTFASAQAADDLLDEIDSVLESNAETFVRSF). Q62 carries the deamidated glutamine modification. Residue Q62 forms an Isoglutamyl lysine isopeptide (Gln-Lys) (interchain with K-? in acceptor proteins) linkage.

It belongs to the prokaryotic ubiquitin-like protein family. Strongly interacts with the proteasome-associated ATPase ARC through a hydrophobic interface; the interacting region of Pup lies in its C-terminal half. There is one Pup binding site per ARC hexamer ring. In terms of processing, is modified by deamidation of its C-terminal glutamine to glutamate by the deamidase Dop, a prerequisite to the subsequent pupylation process.

The protein operates within protein degradation; proteasomal Pup-dependent pathway. Protein modifier that is covalently attached to lysine residues of substrate proteins, thereby targeting them for proteasomal degradation. The tagging system is termed pupylation. The protein is Prokaryotic ubiquitin-like protein Pup of Brachybacterium faecium (strain ATCC 43885 / DSM 4810 / JCM 11609 / LMG 19847 / NBRC 14762 / NCIMB 9860 / 6-10).